The primary structure comprises 38 residues: Large ribosomal subunit protein bL36 (38 aa).

This sequence belongs to the bacterial ribosomal protein bL36 family.

This Prochlorococcus marinus (strain MIT 9312) protein is Large ribosomal subunit protein bL36.